A 492-amino-acid chain; its full sequence is 2-succinylbenzoate--CoA ligase (492 aa).

It belongs to the ATP-dependent AMP-binding enzyme family. MenE subfamily.

It catalyses the reaction 2-succinylbenzoate + ATP + CoA = 2-succinylbenzoyl-CoA + AMP + diphosphate. The protein operates within quinol/quinone metabolism; 1,4-dihydroxy-2-naphthoate biosynthesis; 1,4-dihydroxy-2-naphthoate from chorismate: step 5/7. It participates in quinol/quinone metabolism; menaquinone biosynthesis. Its function is as follows. Converts 2-succinylbenzoate (OSB) to 2-succinylbenzoyl-CoA (OSB-CoA). The polypeptide is 2-succinylbenzoate--CoA ligase (Staphylococcus aureus (strain MRSA252)).